A 573-amino-acid chain; its full sequence is Mitochondrial distribution and morphology protein 34 (573 aa).

In terms of domain architecture, SMP-LTD spans 1–195; that stretch reads MAFNFNWSPL…LPAIIHRLSL (195 aa). Disordered regions lie at residues 301 to 326, 349 to 433, 499 to 521, and 550 to 573; these read EGLG…SSPL, FSGY…RFPN, SREK…ITDA, and LVNN…AYGQ. Residues 306-316 are compositionally biased toward low complexity; the sequence is GLMSPGSPALS. Residues 360 to 373 are compositionally biased toward basic residues; that stretch reads RHTKARPTKKRKKR. The span at 374–385 shows a compositional bias: basic and acidic residues; sequence VVDLRKQSKPTD. Over residues 396 to 409 the composition is skewed to low complexity; the sequence is TETSTASTTFSSST.

The protein belongs to the MDM34 family. Component of the ER-mitochondria encounter structure (ERMES) or MDM complex, composed of MMM1, MDM10, MDM12 and MDM34.

It is found in the mitochondrion outer membrane. In terms of biological role, component of the ERMES/MDM complex, which serves as a molecular tether to connect the endoplasmic reticulum (ER) and mitochondria. Components of this complex are involved in the control of mitochondrial shape and protein biogenesis, and function in nonvesicular lipid trafficking between the ER and mitochondria. MDM34 is required for the interaction of the ER-resident membrane protein MMM1 and the outer mitochondrial membrane-resident beta-barrel protein MDM10. This chain is Mitochondrial distribution and morphology protein 34, found in Uncinocarpus reesii (strain UAMH 1704).